The sequence spans 393 residues: Protein TsgA (393 aa).

12 helical membrane passes run 11 to 31 (WISFLSYALTGALVIVTGMVM), 51 to 71 (FLNAGILISIFLNAWLMEIVP), 78 to 98 (FGFLLMVLAVAGLMFSHSLAL), 101 to 121 (AAMFILGVVSGITMSIGTFLV), 134 to 154 (LLFTDSFFSMAGMIFPMIAAF), 162 to 182 (WYWVYACIGLVYVAIFILTFG), 206 to 226 (IGVLFLSVAALCYILGQLGFI), 245 to 265 (TLVSNFWMSYMVGMWAFSFIL), 273 to 293 (ILTVLAGLAAILMYVFNTGTP), 297 to 317 (AWSILALGFFSSAIYTTIITL), 332 to 352 (FVLTCGTIGTMLTFVVTGPIV), and 361 to 381 (LLTANGLYAVVFVMCFLLGFV).

It belongs to the major facilitator superfamily. TsgA family.

It is found in the cell inner membrane. This is Protein TsgA from Escherichia coli O139:H28 (strain E24377A / ETEC).